Reading from the N-terminus, the 127-residue chain is Protein ApaG (127 aa).

The 125-residue stretch at D3 to H127 folds into the ApaG domain.

This chain is Protein ApaG, found in Dechloromonas aromatica (strain RCB).